We begin with the raw amino-acid sequence, 743 residues long: FHF complex subunit HOOK-interacting protein 2B (743 aa).

Positions 186 to 219 (CGEPTALPKDTTSHGDKDCSHDGAPARPQLDGES) are disordered. The segment covering 196-206 (TTSHGDKDCSH) has biased composition (basic and acidic residues).

Belongs to the FHIP family. In terms of tissue distribution, expressed in liver.

Its function is as follows. Able to activate MAPK/ERK and TGFB signaling pathways. May regulate the activity of genes involved in intestinal barrier function and immunoprotective inflammation. May play a role in cell proliferation. The chain is FHF complex subunit HOOK-interacting protein 2B from Homo sapiens (Human).